A 171-amino-acid chain; its full sequence is Cadmium-induced protein AS8 (171 aa).

The sequence is that of Cadmium-induced protein AS8 from Arabidopsis thaliana (Mouse-ear cress).